A 279-amino-acid chain; its full sequence is Putative expansin-A26 (279 aa).

Residues 1-27 form the signal peptide; sequence MKLLEKMIYVEFLMIIMAMWVVPMSYG. The Expansin-like EG45 domain maps to 76–186; sequence QGACGYGNLF…RRIPCSKTGG (111 aa). The Expansin-like CBD domain occupies 196–275; that stretch reads YFLMVLIYNV…NWGFGQTFDG (80 aa).

It belongs to the expansin family. Expansin A subfamily.

Its subcellular location is the secreted. It is found in the cell wall. The protein localises to the membrane. In terms of biological role, causes loosening and extension of plant cell walls by disrupting non-covalent bonding between cellulose microfibrils and matrix glucans. No enzymatic activity has been found. In Arabidopsis thaliana (Mouse-ear cress), this protein is Putative expansin-A26 (EXPA26).